The following is a 282-amino-acid chain: HTH-type transcriptional activator RhaR (282 aa).

The region spanning 179–277 (DKLITRLAAS…GMTPSQWRHL (99 aa)) is the HTH araC/xylS-type domain. 2 consecutive DNA-binding regions (H-T-H motif) follow at residues 196-217 (DKFC…RQQT) and 244-267 (ISDI…TRET).

As to quaternary structure, binds DNA as a dimer.

Its subcellular location is the cytoplasm. Functionally, activates expression of the rhaSR operon in response to L-rhamnose. This chain is HTH-type transcriptional activator RhaR, found in Escherichia coli O139:H28 (strain E24377A / ETEC).